A 569-amino-acid polypeptide reads, in one-letter code: Atlastin-2 (569 aa).

The interval 1–49 is N-terminal hypervariable region (HVR); it reads MAEGGSLRNRTRFGSRSNEAMNHVDYPDENFVEEIQLNSDTEVMEKPRP. The Cytoplasmic portion of the chain corresponds to 1–464; that stretch reads MAEGGSLRNR…NIFYAARTPA (464 aa). The 245-residue stretch at 80-324 folds into the GB1/RHD3-type G domain; sequence DLNVVVLSVA…LVPLLLAPEN (245 aa). Residues arginine 93, lysine 94, glycine 95, lysine 96, serine 97, phenylalanine 98, glutamine 163, arginine 232, and aspartate 233 each coordinate GDP. 6 residues coordinate GTP: arginine 93, lysine 94, glycine 95, lysine 96, serine 97, and phenylalanine 98. Residue serine 97 participates in Mg(2+) binding. Positions 232 and 233 each coordinate GTP. The stretch at 244–272 forms a coiled coil; that stretch reads LEGGNKFLEKRLQVKQNQHEELQNVRKHI. Residues valine 291 and asparagine 294 each contribute to the GDP site. Residue valine 291 participates in GTP binding. The 3HB (three-helix bundle) domain stretch occupies residues 362-453; it reads MLQATAEANN…YANFLKHNDG (92 aa). Residues 454 to 462 are linker; sequence KNIFYAART. A helical transmembrane segment spans residues 465 to 485; sequence TLFAVMFAMYIISGLTGFIGM. The Lumenal segment spans residues 486–487; that stretch reads NS. A helical membrane pass occupies residues 488 to 508; sequence IATICNLIMGLTLLSFCTWAY. Residues 509 to 569 lie on the Cytoplasmic side of the membrane; it reads VKYSGEFREL…DQVSGRLKTN (61 aa). The interval 535-569 is autoinhibitory domain; that stretch reads KPLSDNLMEDNIRQTVRNSIKAGLTDQVSGRLKTN.

The protein belongs to the TRAFAC class dynamin-like GTPase superfamily. GB1/RHD3 GTPase family. GB1 subfamily. Monomeric and homodimeric. The homodimer, transiently formed by two molecules on opposing membranes, is the active form mediating ER membrane fusion.

The protein resides in the endoplasmic reticulum membrane. It catalyses the reaction GTP + H2O = GDP + phosphate + H(+). Functionally, atlastin-2 (ATL2) is a membrane-anchored GTPase that mediates the GTP-dependent fusion of endoplasmic reticulum (ER) membranes, maintaining the continuous ER network. It facilitates the formation of three-way junctions where ER tubules intersect. Two atlastin-2 on neighboring ER tubules bind GTP and form loose homodimers through the GB1/RHD3-type G domains and 3HB regions. Upon GTP hydrolysis, the 3HB regions tighten, pulling the membranes together to drive their fusion. After fusion, the homodimer disassembles upon release of inorganic phosphate (Pi). Subsequently, GDP dissociates, resetting the monomers to a conformation ready for a new fusion cycle. In Xenopus laevis (African clawed frog), this protein is Atlastin-2 (atl2).